Here is a 168-residue protein sequence, read N- to C-terminus: Putative gustatory receptor clone PTE03 (168 aa).

Residues 1–25 (TTVPKMLINLQKQNKAISYAGCITQ) lie on the Extracellular side of the membrane. An intrachain disulfide couples C22 to C104. Residues 26–45 (LSFVLLFAGMENFLLAAMAY) form a helical membrane-spanning segment. Topologically, residues 46–67 (DRYVAICKPLRYTAIMKAHLCL) are cytoplasmic. The chain crosses the membrane as a helical span at residues 68–88 (VMTLLSLCISIVDALLHGLMI). Over 89-121 (LRLSFCTFLEIPHYFCELYQVIKLSCSDTLINN) the chain is Extracellular. The helical transmembrane segment at 122–143 (ILVYTMTSTLGGVPLGGIIFSY) threads the bilayer. The Cytoplasmic portion of the chain corresponds to 144-165 (FKIISSILRMPSSGSRHRAFST). Residues 166–168 (CGS) traverse the membrane as a helical segment.

The protein belongs to the G-protein coupled receptor 1 family. As to expression, tongue specific.

Its subcellular location is the cell membrane. Possible taste receptor. This is Putative gustatory receptor clone PTE03 (Olr1145) from Rattus norvegicus (Rat).